Reading from the N-terminus, the 233-residue chain is Small ribosomal subunit protein uS2 (233 aa).

Belongs to the universal ribosomal protein uS2 family.

This is Small ribosomal subunit protein uS2 from Bacillus cytotoxicus (strain DSM 22905 / CIP 110041 / 391-98 / NVH 391-98).